The following is a 200-amino-acid chain: Endoribonuclease YbeY (200 aa).

Zn(2+) is bound by residues H120, H124, and H130.

The protein belongs to the endoribonuclease YbeY family. It depends on Zn(2+) as a cofactor.

It is found in the cytoplasm. Single strand-specific metallo-endoribonuclease involved in late-stage 70S ribosome quality control and in maturation of the 3' terminus of the 16S rRNA. The polypeptide is Endoribonuclease YbeY (Corynebacterium efficiens (strain DSM 44549 / YS-314 / AJ 12310 / JCM 11189 / NBRC 100395)).